The sequence spans 213 residues: Orotate phosphoribosyltransferase (213 aa).

Lys-26 contacts 5-phospho-alpha-D-ribose 1-diphosphate. 34-35 (FF) is an orotate binding site. Residues 72–73 (YK), Arg-99, Lys-100, Lys-103, His-105, and 124–132 (DDVITAGTA) contribute to the 5-phospho-alpha-D-ribose 1-diphosphate site. Orotate is bound by residues Thr-128 and Arg-156.

It belongs to the purine/pyrimidine phosphoribosyltransferase family. PyrE subfamily. Homodimer. The cofactor is Mg(2+).

It catalyses the reaction orotidine 5'-phosphate + diphosphate = orotate + 5-phospho-alpha-D-ribose 1-diphosphate. Its pathway is pyrimidine metabolism; UMP biosynthesis via de novo pathway; UMP from orotate: step 1/2. Functionally, catalyzes the transfer of a ribosyl phosphate group from 5-phosphoribose 1-diphosphate to orotate, leading to the formation of orotidine monophosphate (OMP). The chain is Orotate phosphoribosyltransferase from Thioalkalivibrio sulfidiphilus (strain HL-EbGR7).